The sequence spans 271 residues: Glutamate racemase (271 aa).

Substrate-binding positions include 10–11 (DS) and 42–43 (YG). The active-site Proton donor/acceptor is the C73. A substrate-binding site is contributed by 74–75 (NT). C183 (proton donor/acceptor) is an active-site residue. 184–185 (TH) is a substrate binding site.

This sequence belongs to the aspartate/glutamate racemases family.

The catalysed reaction is L-glutamate = D-glutamate. The protein operates within cell wall biogenesis; peptidoglycan biosynthesis. Its function is as follows. Provides the (R)-glutamate required for cell wall biosynthesis. The protein is Glutamate racemase of Lactococcus lactis subsp. cremoris (strain SK11).